Consider the following 290-residue polypeptide: Ribosomal RNA small subunit methyltransferase A (290 aa).

Asparagine 27, leucine 29, glycine 54, glutamate 75, aspartate 100, and asparagine 125 together coordinate S-adenosyl-L-methionine.

The protein belongs to the class I-like SAM-binding methyltransferase superfamily. rRNA adenine N(6)-methyltransferase family. RsmA subfamily.

It localises to the cytoplasm. It catalyses the reaction adenosine(1518)/adenosine(1519) in 16S rRNA + 4 S-adenosyl-L-methionine = N(6)-dimethyladenosine(1518)/N(6)-dimethyladenosine(1519) in 16S rRNA + 4 S-adenosyl-L-homocysteine + 4 H(+). Its function is as follows. Specifically dimethylates two adjacent adenosines (A1518 and A1519) in the loop of a conserved hairpin near the 3'-end of 16S rRNA in the 30S particle. May play a critical role in biogenesis of 30S subunits. In Streptococcus pneumoniae (strain JJA), this protein is Ribosomal RNA small subunit methyltransferase A.